Consider the following 737-residue polypeptide: Translation initiation factor IF-2 (737 aa).

Positions 55-152 (KKKEHIQHNK…PVPPRKNKPL (98 aa)) are disordered. Positions 60–70 (IQHNKNKDNFH) are enriched in basic and acidic residues. Residues 88–98 (KNVHKNNRKRS) show a composition bias toward basic residues. The span at 105-121 (NNNAKNGQRNNRNNRSN) shows a compositional bias: low complexity. Positions 122-131 (NKFKNKRNNN) are enriched in basic residues. Over residues 132–142 (NKRNNNFKKGN) the composition is skewed to low complexity. Positions 238 to 407 (KRPPVVTIMG…LLEAEMLELH (170 aa)) constitute a tr-type G domain. The tract at residues 247–254 (GHVDHGKT) is G1. Residue 247 to 254 (GHVDHGKT) coordinates GTP. Residues 272–276 (GITQH) are G2. The tract at residues 293–296 (DTPG) is G3. GTP-binding positions include 293 to 297 (DTPGH) and 347 to 350 (NKID). A G4 region spans residues 347–350 (NKID). The segment at 383–385 (SAK) is G5.

This sequence belongs to the TRAFAC class translation factor GTPase superfamily. Classic translation factor GTPase family. IF-2 subfamily.

It localises to the cytoplasm. Its function is as follows. One of the essential components for the initiation of protein synthesis. Protects formylmethionyl-tRNA from spontaneous hydrolysis and promotes its binding to the 30S ribosomal subunits. Also involved in the hydrolysis of GTP during the formation of the 70S ribosomal complex. The protein is Translation initiation factor IF-2 of Ligilactobacillus salivarius (strain UCC118) (Lactobacillus salivarius).